The sequence spans 2715 residues: Histone-lysine N-methyltransferase 2B (2715 aa).

Residues 1–11 (MAAAAGGGSCP) are compositionally biased toward gly residues. Disordered regions lie at residues 1-65 (MAAA…GEDT), 81-302 (RRLW…GGLP), 320-518 (SLGL…PKST), and 532-771 (VSAR…QMPP). Ala-2 carries the post-translational modification N-acetylalanine. Residues 12–24 (GPGSARGRFPGRP) are compositionally biased toward low complexity. Residues 17–36 (RGRFPGRPRGAGGGGGRGGR) carry the Menin-binding motif (MBM) motif. Composition is skewed to gly residues over residues 25–38 (RGAG…GRGN) and 49–60 (RGGGATGPGGAE). The segment at residues 37-44 (GNGAERVR) is a DNA-binding region (a.T hook 1). A compositionally biased stretch (acidic residues) spans 109–123 (PEEESSDGESDEEEF). Positions 110-117 (EEESSDGE) form a DNA-binding region, a.T hook 2. Ser-113, Ser-114, and Ser-118 each carry phosphoserine. Residues 144 to 158 (QRGRAPRGRGRKHKT) show a composition bias toward basic residues. A compositionally biased stretch (pro residues) spans 160–176 (PLPPPRLADVAPTPPKT). A compositionally biased stretch (low complexity) spans 199–208 (RAQAPQAPRS). At Ser-351 the chain carries Phosphoserine. Residues 357 to 365 (QEQKLDDEE) constitute a DNA-binding region (a.T hook 3). Positions 361–374 (LDDEEEEKKEEEEK) are enriched in acidic residues. A compositionally biased stretch (basic and acidic residues) spans 375–387 (DKEGEEKEERAVA). Over residues 401 to 449 (LPPPPLTPPAPSPPPPLPPPSTSPPPPLCPPPPPPVSPPPLPSPPPPPA) the composition is skewed to pro residues. Over residues 545–556 (RFMDEDPPKPPK) the composition is skewed to basic and acidic residues. The segment covering 568–596 (TTSPPVPQEPAPVPSPPRAPTPPSTPVPL) has biased composition (pro residues). Residues 597–608 (PEKRRSILREPT) show a composition bias toward basic and acidic residues. Over residues 618–637 (LPPPPPAPPPPPAPSPPPAP) the composition is skewed to pro residues. Low complexity predominate over residues 731-751 (PQTQAQLLQPLQALQTQLLPQ). A compositionally biased stretch (pro residues) spans 752 to 769 (ALPPPQPQLQPPPSPQQM). Lys-805 participates in a covalent cross-link: Glycyl lysine isopeptide (Lys-Gly) (interchain with G-Cter in SUMO2). 2 disordered regions span residues 819-868 (PLSP…GPRI) and 894-959 (SALP…HHGK). Phosphoserine is present on residues Ser-821, Ser-844, and Ser-861. The segment covering 836–857 (ISDRGPVRSEDESVEAKRERPS) has biased composition (basic and acidic residues). Low complexity predominate over residues 907-917 (EDTSSASETES). Ser-936 carries the post-translational modification Phosphoserine. Residues 948–959 (TPRRSLPSHHGK) are compositionally biased toward basic residues. The segment at 959–1006 (KKMRMARCGHCRGCLRVQDCGSCVNCLDKPKFGGPNTKKQCCVYRKCD) adopts a CXXC-type zinc-finger fold. Zn(2+)-binding residues include Cys-966, Cys-969, Cys-972, Cys-978, Cys-981, Cys-984, Cys-1000, and Cys-1005. Residues 1027–1132 (LLPWDSDESP…RPRKPTLQPV (106 aa)) form a disordered region. 4 positions are modified to phosphoserine: Ser-1032, Ser-1035, Ser-1092, and Ser-1095. Lys-1136 is covalently cross-linked (Glycyl lysine isopeptide (Lys-Gly) (interchain with G-Cter in SUMO2)). The disordered stretch occupies residues 1146–1166 (LAPGPFASFPNGWTGKQKSPD). 3 PHD-type zinc fingers span residues 1201-1252 (PMVC…CKFC), 1249-1303 (CKFC…CVRC), and 1335-1396 (GNYC…CAGA). One can recognise a Bromo domain in the interval 1404-1504 (ALSGALQGGL…GLLLKLLESA (101 aa)). The tract at residues 1545 to 1567 (QQEPETPESGQPPGDPSAAFQGK) is disordered. Residues 1578 to 1618 (PRQCALCLKYGDADSKEAGRLLYIGQNEWTHVNCAIWSAEV) form a C2HC pre-PHD-type zinc finger. A PHD-type 4 zinc finger spans residues 1639-1686 (MRCELCLKPGATVGCCLSSCLSNFHFMCARASYCIFQDDKKVFCQKHT). Residues 1727–1783 (AINVLIGSIRIDSLGTLSDLSDCEGRLFPIGYQCSRLYWSTVDARRRCWYRCRILEY) form the FYR N-terminal domain. Disordered stretches follow at residues 1806–1978 (HSPA…PDFE), 2008–2093 (VAAG…VVRA), 2118–2162 (LKNL…PTRT), and 2280–2412 (RVST…RTGP). Residues 1876-1894 (PLGGVSFGPLPSPGSPSSL) are compositionally biased toward low complexity. Residues Ser-1930 and Ser-1936 each carry the phosphoserine modification. Positions 1960-1972 (PPGPAPSPPPPED) are enriched in pro residues. Residues 2062–2072 (DGVDDGTDSEA) are compositionally biased toward acidic residues. Phosphothreonine occurs at positions 2068 and 2083. The segment covering 2144–2153 (NGSQPSQGLT) has biased composition (polar residues). Phosphoserine occurs at positions 2288 and 2348. Positions 2342–2351 (EPAGEESPGP) are enriched in low complexity. Pro residues predominate over residues 2359-2373 (LPLPEDGPPQVPDGP). Residues 2411 to 2492 (GPHLRFEISS…QRCQHYKFRY (82 aa)) form the FYR C-terminal domain. The short motif at 2508–2513 (GAARAE) is the WDR5 interaction motif (WIN) element. The SET domain occupies 2575–2691 (EAVGVYRSAI…RGEELTYDYK (117 aa)). Residues His-2585, Arg-2587, Tyr-2629, and 2652-2653 (NH) contribute to the S-adenosyl-L-methionine site. Residues Cys-2655 and Cys-2703 each coordinate Zn(2+). The 17-residue stretch at 2699-2715 (NKLPCNCGAKRCRRFLN) folds into the Post-SET domain. An S-adenosyl-L-methionine-binding site is contributed by Asn-2704. The Zn(2+) site is built by Cys-2705 and Cys-2710.

Belongs to the class V-like SAM-binding methyltransferase superfamily. Histone-lysine methyltransferase family. TRX/MLL subfamily. Component of the menin-associated histone methyltransferase complex, at least composed of KMT2B/MLL4, ASH2L, RBBP5, WDR5, DPY30, MEN1; the complex interacts with POLR2A and POLR2B via MEN1. Interacts with NFE2. Interacts with KDM6B. Interacts (via WIN motif) with WDR5. Interacts (via MBM motif) with MEN1. Forms a core complex with the evolutionary conserved subcomplex WRAD composed of WDR5, RBBP5, ASH2L/ASH2 and DPY30 subunits; WRAD differentially stimulates the methyltransferase activity. Widely expressed. Highest levels in testis. Also found in brain with higher expression in the cerebellum than in any other region, bone marrow, heart, muscle, kidney, placenta, spleen, thymus, prostate, ovary, intestine, colon, peripheral blood lymphocytes and pancreas. Often amplified in pancreatic carcinomas.

The protein localises to the nucleus. The enzyme catalyses L-lysyl(4)-[histone H3] + S-adenosyl-L-methionine = N(6)-methyl-L-lysyl(4)-[histone H3] + S-adenosyl-L-homocysteine + H(+). It carries out the reaction N(6)-methyl-L-lysyl(4)-[histone H3] + S-adenosyl-L-methionine = N(6),N(6)-dimethyl-L-lysyl(4)-[histone H3] + S-adenosyl-L-homocysteine + H(+). Its function is as follows. Histone methyltransferase that catalyzes methyl group transfer from S-adenosyl-L-methionine to the epsilon-amino group of 'Lys-4' of histone H3 (H3K4) via a non-processive mechanism. Part of chromatin remodeling machinery predominantly forms H3K4me1 and H3K4me2 methylation marks at active chromatin sites where transcription and DNA repair take place. Likely plays a redundant role with KMT2C in enriching H3K4me1 marks on primed and active enhancer elements. Plays a central role in beta-globin locus transcription regulation by being recruited by NFE2. Plays an important role in controlling bulk H3K4me during oocyte growth and preimplantation development. Required during the transcriptionally active period of oocyte growth for the establishment and/or maintenance of bulk H3K4 trimethylation (H3K4me3), global transcriptional silencing that preceeds resumption of meiosis, oocyte survival and normal zygotic genome activation. In Homo sapiens (Human), this protein is Histone-lysine N-methyltransferase 2B (KMT2B).